The following is an 82-amino-acid chain: Putative membrane protein insertion efficiency factor (82 aa).

The segment at 61–82 (HEGGYDPVPKRKNKNSEGKREE) is disordered.

This sequence belongs to the UPF0161 family.

The protein localises to the cell inner membrane. Could be involved in insertion of integral membrane proteins into the membrane. The sequence is that of Putative membrane protein insertion efficiency factor from Fusobacterium nucleatum subsp. nucleatum (strain ATCC 25586 / DSM 15643 / BCRC 10681 / CIP 101130 / JCM 8532 / KCTC 2640 / LMG 13131 / VPI 4355).